Here is a 173-residue protein sequence, read N- to C-terminus: Large ribosomal subunit protein bL9 (173 aa).

Belongs to the bacterial ribosomal protein bL9 family.

Functionally, binds to the 23S rRNA. The sequence is that of Large ribosomal subunit protein bL9 from Chlamydia felis (strain Fe/C-56) (Chlamydophila felis).